The following is a 428-amino-acid chain: Cholesterol 7-desaturase (428 aa).

A helical membrane pass occupies residues 6–26 (IWGFLTAHPISVVTTILIVYL). The 107-residue stretch at 81 to 187 (WYCVCESEKL…CIERNNNIYL (107 aa)) folds into the Rieske domain. [2Fe-2S] cluster is bound by residues Cys122, His124, Cys143, and His146.

Belongs to the cholesterol 7-desaturase family. The cofactor is [2Fe-2S] cluster. Expressed in intestine at all postembryonic stages, including dauer. Expression is reduced in daf-2 mutants.

Its subcellular location is the membrane. It carries out the reaction cholesterol + NADPH + O2 + H(+) = 7-dehydrocholesterol + NADP(+) + 2 H2O. The catalysed reaction is cholesterol + NADH + O2 + H(+) = 7-dehydrocholesterol + NAD(+) + 2 H2O. The protein operates within steroid hormone biosynthesis; dafachronic acid biosynthesis. Catalyzes the production of 7-dehydrocholesterol (7-DHC or cholesta-5,7-dien-3beta-ol) by inserting a double bond (desaturating) at the C7-C8 single bond of cholesterol. This reaction is the first step in the synthesis of the steroid hormone Delta(7)-dafachronic acid (one of the principal steroid hormones in nematodes). Dafachronic acids bind directly to the nuclear hormone receptor (NHR) daf-12, suppressing dauer formation and inducing reproductive growth. The protein is Cholesterol 7-desaturase (daf-36) of Caenorhabditis elegans.